The primary structure comprises 602 residues: T-box transcription factor TBX15 (602 aa).

Residues 46–84 (ALSPAGPLGDTEDAAAHGLEPHPDSEQSTGSDSEVLTER) form a disordered region. A compositionally biased stretch (polar residues) spans 71–84 (EQSTGSDSEVLTER). Positions 122–304 (LWKRFHDIGT…RNPFAKGFRD (183 aa)) form a DNA-binding region, T-box. Thr330 carries the phosphothreonine modification. Disordered stretches follow at residues 338-369 (QKQQ…LSPS) and 425-447 (QSGT…PSLI). The segment covering 346–369 (GTSPTTSSTGTPSPSASSHLLSPS) has biased composition (low complexity). The segment covering 425 to 446 (QSGTTSATQPSETFMPQRTPSL) has biased composition (polar residues).

In terms of assembly, can form a heterodimer with TBX18.

The protein resides in the nucleus. Its function is as follows. Probable transcriptional regulator involved in the development of the skeleton of the limb, vertebral column and head. Acts by controlling the number of mesenchymal precursor cells and chondrocytes. The sequence is that of T-box transcription factor TBX15 (TBX15) from Homo sapiens (Human).